The primary structure comprises 446 residues: Peroxisomal biogenesis factor 3 (446 aa).

Residues 1–12 (MARTGLQRHRGK) are Peroxisomal-facing. A helical membrane pass occupies residues 13-33 (LLGTGAVLGGLVVAGVVAAVA). Over 34–446 (AKRWVRRQQQ…SASVYSNFGV (413 aa)) the chain is Cytoplasmic. The interval 101–122 (RAGEDDEQGSGGHASAGEGSVS) is disordered.

Belongs to the peroxin-3 family.

The protein resides in the peroxisome membrane. Its function is as follows. Involved in peroxisome biosynthesis. This is Peroxisomal biogenesis factor 3 (PEX3) from Eremothecium gossypii (strain ATCC 10895 / CBS 109.51 / FGSC 9923 / NRRL Y-1056) (Yeast).